The chain runs to 239 residues: Exosome complex component Rrp4 (239 aa).

The region spanning 67-139 (GDFVVGIVEE…PVQRVELSLL (73 aa)) is the S1 motif domain. The KH domain occupies 151–217 (QGGQVVEIDP…LAVRAIREIE (67 aa)).

The protein belongs to the RRP4 family. As to quaternary structure, component of the archaeal exosome complex. Forms a trimer of Rrp4 and/or Csl4 subunits. The trimer associates with a hexameric ring-like arrangement composed of 3 Rrp41-Rrp42 heterodimers.

The protein resides in the cytoplasm. Functionally, non-catalytic component of the exosome, which is a complex involved in RNA degradation. Increases the RNA binding and the efficiency of RNA degradation. Confers strong poly(A) specificity to the exosome. This chain is Exosome complex component Rrp4, found in Methanopyrus kandleri (strain AV19 / DSM 6324 / JCM 9639 / NBRC 100938).